Consider the following 193-residue polypeptide: ATP synthase subunit b 1 (193 aa).

A disordered region spans residues 9–28; sequence QEADHTAGETHTETGVAEGG. Residues 10-20 are compositionally biased toward basic and acidic residues; the sequence is EADHTAGETHT. A helical transmembrane segment spans residues 40 to 59; the sequence is TYPSQLLWLAITFGLFYLFL.

The protein belongs to the ATPase B chain family. In terms of assembly, F-type ATPases have 2 components, F(1) - the catalytic core - and F(0) - the membrane proton channel. F(1) has five subunits: alpha(3), beta(3), gamma(1), delta(1), epsilon(1). F(0) has three main subunits: a(1), b(2) and c(10-14). The alpha and beta chains form an alternating ring which encloses part of the gamma chain. F(1) is attached to F(0) by a central stalk formed by the gamma and epsilon chains, while a peripheral stalk is formed by the delta and b chains.

It localises to the cell inner membrane. Functionally, f(1)F(0) ATP synthase produces ATP from ADP in the presence of a proton or sodium gradient. F-type ATPases consist of two structural domains, F(1) containing the extramembraneous catalytic core and F(0) containing the membrane proton channel, linked together by a central stalk and a peripheral stalk. During catalysis, ATP synthesis in the catalytic domain of F(1) is coupled via a rotary mechanism of the central stalk subunits to proton translocation. Its function is as follows. Component of the F(0) channel, it forms part of the peripheral stalk, linking F(1) to F(0). The polypeptide is ATP synthase subunit b 1 (Chelativorans sp. (strain BNC1)).